The following is a 167-amino-acid chain: Peptidoglycan-binding-like protein (167 aa).

The N-terminal stretch at 1–24 (MRSPKVKFLTIFTLSILITKMSFA) is a signal peptide.

Belongs to the IagB/IpgF/P19 family.

The protein localises to the periplasm. The protein is Peptidoglycan-binding-like protein (pbl) of Escherichia coli O157:H7.